The following is a 689-amino-acid chain: Elongation factor G (689 aa).

Residues 8-282 enclose the tr-type G domain; sequence ERTRNIGIMA…GVVAYMPSPL (275 aa). GTP is bound by residues 17–24, 81–85, and 135–138; these read AHIDAGKT, DTPGH, and NKMD.

Belongs to the TRAFAC class translation factor GTPase superfamily. Classic translation factor GTPase family. EF-G/EF-2 subfamily.

It is found in the cytoplasm. Its function is as follows. Catalyzes the GTP-dependent ribosomal translocation step during translation elongation. During this step, the ribosome changes from the pre-translocational (PRE) to the post-translocational (POST) state as the newly formed A-site-bound peptidyl-tRNA and P-site-bound deacylated tRNA move to the P and E sites, respectively. Catalyzes the coordinated movement of the two tRNA molecules, the mRNA and conformational changes in the ribosome. In Alkaliphilus metalliredigens (strain QYMF), this protein is Elongation factor G.